The chain runs to 455 residues: Ribulose bisphosphate carboxylase large chain (455 aa).

Residue Lys-5 is modified to N6,N6,N6-trimethyllysine. Substrate is bound by residues Asn-114 and Thr-164. Lys-166 acts as the Proton acceptor in catalysis. Position 168 (Lys-168) interacts with substrate. Mg(2+)-binding residues include Lys-192, Asp-194, and Glu-195. Lys-192 carries the post-translational modification N6-carboxylysine. His-285 functions as the Proton acceptor in the catalytic mechanism. Arg-286, His-318, and Ser-370 together coordinate substrate.

The protein belongs to the RuBisCO large chain family. Type I subfamily. Heterohexadecamer of 8 large chains and 8 small chains; disulfide-linked. The disulfide link is formed within the large subunit homodimers. The cofactor is Mg(2+). Post-translationally, the disulfide bond which can form in the large chain dimeric partners within the hexadecamer appears to be associated with oxidative stress and protein turnover.

The protein resides in the plastid. Its subcellular location is the chloroplast. The catalysed reaction is 2 (2R)-3-phosphoglycerate + 2 H(+) = D-ribulose 1,5-bisphosphate + CO2 + H2O. It catalyses the reaction D-ribulose 1,5-bisphosphate + O2 = 2-phosphoglycolate + (2R)-3-phosphoglycerate + 2 H(+). Its function is as follows. RuBisCO catalyzes two reactions: the carboxylation of D-ribulose 1,5-bisphosphate, the primary event in carbon dioxide fixation, as well as the oxidative fragmentation of the pentose substrate in the photorespiration process. Both reactions occur simultaneously and in competition at the same active site. The chain is Ribulose bisphosphate carboxylase large chain from Brownea coccinea (Rose of Venezuela).